Consider the following 584-residue polypeptide: Aspartate--tRNA(Asp/Asn) ligase (584 aa).

Glu174 lines the L-aspartate pocket. Residues 198-201 (QLFK) are aspartate. Residue Arg220 participates in L-aspartate binding. ATP contacts are provided by residues 220-222 (RDE) and Gln229. An L-aspartate-binding site is contributed by His447. Position 480 (Glu480) interacts with ATP. Position 487 (Arg487) interacts with L-aspartate. 532-535 (GFDR) is a binding site for ATP.

Belongs to the class-II aminoacyl-tRNA synthetase family. Type 1 subfamily. Homodimer.

Its subcellular location is the cytoplasm. The catalysed reaction is tRNA(Asx) + L-aspartate + ATP = L-aspartyl-tRNA(Asx) + AMP + diphosphate. Its function is as follows. Aspartyl-tRNA synthetase with relaxed tRNA specificity since it is able to aspartylate not only its cognate tRNA(Asp) but also tRNA(Asn). Reaction proceeds in two steps: L-aspartate is first activated by ATP to form Asp-AMP and then transferred to the acceptor end of tRNA(Asp/Asn). The chain is Aspartate--tRNA(Asp/Asn) ligase from Endomicrobium trichonymphae.